A 182-amino-acid chain; its full sequence is Crossover junction endodeoxyribonuclease RuvC (182 aa).

Catalysis depends on residues D7, E69, and D141. Mg(2+) is bound by residues D7, E69, and D141.

This sequence belongs to the RuvC family. As to quaternary structure, homodimer which binds Holliday junction (HJ) DNA. The HJ becomes 2-fold symmetrical on binding to RuvC with unstacked arms; it has a different conformation from HJ DNA in complex with RuvA. In the full resolvosome a probable DNA-RuvA(4)-RuvB(12)-RuvC(2) complex forms which resolves the HJ. The cofactor is Mg(2+).

The protein localises to the cytoplasm. It catalyses the reaction Endonucleolytic cleavage at a junction such as a reciprocal single-stranded crossover between two homologous DNA duplexes (Holliday junction).. Functionally, the RuvA-RuvB-RuvC complex processes Holliday junction (HJ) DNA during genetic recombination and DNA repair. Endonuclease that resolves HJ intermediates. Cleaves cruciform DNA by making single-stranded nicks across the HJ at symmetrical positions within the homologous arms, yielding a 5'-phosphate and a 3'-hydroxyl group; requires a central core of homology in the junction. The consensus cleavage sequence is 5'-(A/T)TT(C/G)-3'. Cleavage occurs on the 3'-side of the TT dinucleotide at the point of strand exchange. HJ branch migration catalyzed by RuvA-RuvB allows RuvC to scan DNA until it finds its consensus sequence, where it cleaves and resolves the cruciform DNA. The polypeptide is Crossover junction endodeoxyribonuclease RuvC (Polaromonas sp. (strain JS666 / ATCC BAA-500)).